We begin with the raw amino-acid sequence, 68 residues long: Lantibiotic mersacidin (68 aa).

Residues 1 to 28 (MSQEAIIRSWKDPFSRENSTQNPAGNPF) are disordered. Positions 1-48 (MSQEAIIRSWKDPFSRENSTQNPAGNPFSELKEAQMDKLVGAGDMEAA) are excised as a propeptide. Positions 49–50 (CT) form a cross-link, beta-methyllanthionine (Cys-Thr). 2 cross-links (beta-methyllanthionine (Thr-Cys)) span residues 52–60 (TLPGGGGVC) and 61–66 (TLTSEC). The segment at residues 63-68 (TSECIC) is a cross-link (S-(2-aminovinyl)-3-methyl-D-cysteine (Thr-Cys)). Serine 64 bears the 2,3-didehydroalanine (Ser) mark.

Belongs to the type B lantibiotic family. Maturation of lantibiotics involves the enzymatic conversion of Thr, and Ser into dehydrated AA and the formation of thioether bonds with cysteine. The carboxy-terminal beta-methyllanthionine undergoes decarboxylation. This is followed by membrane translocation and cleavage of the modified precursor.

In terms of biological role, kills a number of Gram-positive bacteria. Acts at the level of cell wall biosynthesis by interfering with bacterial peptidoglycan biosynthesis. Specifically inhibits the conversion of the lipid II intermediate into polymeric nascent glycan strands by transglycosylation. May interact with the peptidoglycan precursor rather than with the enzyme. In Bacillus sp. (strain HIL-Y85/54728), this protein is Lantibiotic mersacidin (mrsA).